The primary structure comprises 154 residues: Small ribosomal subunit protein uS13 (154 aa).

The protein belongs to the universal ribosomal protein uS13 family.

It is found in the cytoplasm. Its function is as follows. Located at the top of the head of the 40S subunit, it contacts several helices of the 18S rRNA. This Dictyostelium discoideum (Social amoeba) protein is Small ribosomal subunit protein uS13 (rps18).